A 416-amino-acid polypeptide reads, in one-letter code: E3 ubiquitin-protein ligase makorin-2 (416 aa).

C3H1-type zinc fingers lie at residues Ser2–Ala29 and Ser31–Pro58. The disordered stretch occupies residues Ala61–Pro144. Residues His95 to Pro123 are compositionally biased toward basic and acidic residues. Phosphoserine is present on Ser139. The segment at Ser165–Met192 adopts a C3H1-type 3 zinc-finger fold. The tract at residues Cys193 to His222 is makorin-type Cys-His. The segment at Cys238–Arg292 adopts an RING-type zinc-finger fold. The C3H1-type 4 zinc-finger motif lies at Gly321–Pro350.

In terms of assembly, interacts with PDLIM2 (via LIM zinc-binding domain). Interacts with RELA. In terms of tissue distribution, highly expressed in the testis, and lower expression in the brain, thymus, heart, lung, liver, spleen, kidney, ovary, uterus, and seminal vesicle (at protein level). Expressed in primary immune cells, such as CD4-positive and CD8-positive T cells, CD19-positive B cells and CD11c-positive dendritic cells, and in embryonic fibroblasts (at protein level).

Its subcellular location is the cytoplasm. It is found in the nucleus. It catalyses the reaction S-ubiquitinyl-[E2 ubiquitin-conjugating enzyme]-L-cysteine + [acceptor protein]-L-lysine = [E2 ubiquitin-conjugating enzyme]-L-cysteine + N(6)-ubiquitinyl-[acceptor protein]-L-lysine.. The protein operates within protein modification; protein ubiquitination. Its function is as follows. E3 ubiquitin ligase catalyzing the covalent attachment of ubiquitin moieties onto substrate proteins. Promotes the polyubiquitination and proteasome-dependent degradation of RELA/p65, thereby suppressing RELA-mediated NF-kappa-B transactivation and negatively regulating inflammatory responses. Plays a role in the regulation of spermiation and in male fertility. This chain is E3 ubiquitin-protein ligase makorin-2 (Mkrn2), found in Mus musculus (Mouse).